We begin with the raw amino-acid sequence, 144 residues long: Large ribosomal subunit protein uL15 (144 aa).

The tract at residues 1 to 53 (MRLNTLSPAEGAKHAPKRLGRGIGSGLGKTGGRGHKGQKSRSGGGVRRGFEGG) is disordered. Residues 21–31 (RGIGSGLGKTG) are compositionally biased toward gly residues.

The protein belongs to the universal ribosomal protein uL15 family. As to quaternary structure, part of the 50S ribosomal subunit.

Binds to the 23S rRNA. This chain is Large ribosomal subunit protein uL15, found in Pectobacterium carotovorum subsp. carotovorum (strain PC1).